Reading from the N-terminus, the 447-residue chain is Phospholipase A(1) LCAT3 (447 aa).

Residue S177 is the Acyl-ester intermediate of the active site. Active-site charge relay system residues include D384 and H409.

It belongs to the AB hydrolase superfamily. Lipase family.

It localises to the microsome membrane. It carries out the reaction a 1,2-diacyl-sn-glycero-3-phosphocholine + H2O = a 2-acyl-sn-glycero-3-phosphocholine + a fatty acid + H(+). Hydrolyzes the sn-1 acylester bond of phospholipids. Phosphatidylcholine, phosphatidylethanolamine and phosphatidic acid can be used as substrates. Weak activity with lysophosphatidylcholine and no activity with tripalmitoylglycerol and cholesteryl oleate. Seems to have a preference for unsaturated fatty acids at the sn-1 position. The sequence is that of Phospholipase A(1) LCAT3 (LCAT3) from Arabidopsis thaliana (Mouse-ear cress).